We begin with the raw amino-acid sequence, 215 residues long: Histone-like protein 18C (215 aa).

Residues 140-215 are disordered; it reads CTPRKENKCS…PKSSKPKCSM (76 aa). Basic residues-rich tracts occupy residues 149–190 and 197–215; these read SKPR…RPRK and AKAKPRCLKPKSSKPKCSM.

Its function is as follows. Not known. Encoded in the intron of cAMP-dependent protein kinase regulatory chain type I. This Drosophila melanogaster (Fruit fly) protein is Histone-like protein 18C (Mst77F).